Reading from the N-terminus, the 76-residue chain is UPF0291 protein MW2494 (76 aa).

Belongs to the UPF0291 family.

The protein localises to the cytoplasm. This is UPF0291 protein MW2494 from Staphylococcus aureus (strain MW2).